We begin with the raw amino-acid sequence, 165 residues long: Endoribonuclease YbeY (165 aa).

Positions 130, 134, and 140 each coordinate Zn(2+).

It belongs to the endoribonuclease YbeY family. It depends on Zn(2+) as a cofactor.

The protein resides in the cytoplasm. Its function is as follows. Single strand-specific metallo-endoribonuclease involved in late-stage 70S ribosome quality control and in maturation of the 3' terminus of the 16S rRNA. In Streptococcus suis (strain 98HAH33), this protein is Endoribonuclease YbeY.